The chain runs to 398 residues: Methionine aminopeptidase 1A (398 aa).

N-acetylalanine is present on Ala2. Residues 12-65 (TLSCARCEKPAHLQCPKCIDLKLPREQASFCTQECFKAAWSSHKSVHVKAQLSS) form a C6H2-type zinc finger. Residues Cys15, Cys18, Cys26, Cys29, Cys42, Cys46, His54, and His58 each contribute to the Zn(2+) site. His214 provides a ligand contact to a protein. Residues Asp231, Asp242, and His305 each coordinate Zn(2+). His312 is a binding site for a protein. Zn(2+) is bound by residues Glu338 and Glu369.

It belongs to the peptidase M24A family. Methionine aminopeptidase type 1 subfamily. Associates with the 60S ribosomal subunit of the 80S translational complex. The cofactor is Zn(2+). Co(2+) is required as a cofactor. Mn(2+) serves as cofactor. It depends on Fe(2+) as a cofactor. Ubiquitous.

Its subcellular location is the cytoplasm. The enzyme catalyses Release of N-terminal amino acids, preferentially methionine, from peptides and arylamides.. Cotranslationally removes the N-terminal methionine from nascent proteins. The N-terminal methionine is often cleaved when the second residue in the primary sequence is small and uncharged (Met-Ala-, Cys, Gly, Pro, Ser, Thr, or Val). The protein is Methionine aminopeptidase 1A (MAP1A) of Arabidopsis thaliana (Mouse-ear cress).